A 213-amino-acid polypeptide reads, in one-letter code: Adenylate kinase (213 aa).

Position 10–15 (10–15 (GAGKGT)) interacts with ATP. Residues 30–59 (STGDMLRAAVAAGSEVGLRAKAAMESGSLV) are NMP. Residues T31, R36, 57–59 (SLV), 85–88 (GFPR), and Q92 each bind AMP. The LID stretch occupies residues 126-163 (GRSSCEKCGEGYHDSFKPSAQPNVCDKCSGTLKRRADD). An ATP-binding site is contributed by R127. Zn(2+) is bound by residues C130, C133, C150, and C153. 2 residues coordinate AMP: R160 and R171. Q199 contacts ATP.

Belongs to the adenylate kinase family. In terms of assembly, monomer.

Its subcellular location is the cytoplasm. The enzyme catalyses AMP + ATP = 2 ADP. Its pathway is purine metabolism; AMP biosynthesis via salvage pathway; AMP from ADP: step 1/1. Catalyzes the reversible transfer of the terminal phosphate group between ATP and AMP. Plays an important role in cellular energy homeostasis and in adenine nucleotide metabolism. This chain is Adenylate kinase, found in Magnetococcus marinus (strain ATCC BAA-1437 / JCM 17883 / MC-1).